Consider the following 358-residue polypeptide: Thiol protease aleurain (358 aa).

The signal sequence occupies residues 1-21; the sequence is MSAKTILSSVVLVVLVAASAA. The interval 22-42 is interaction with VSR1; it reads ANIGFDESNPIRMVSDGLREV. A propeptide spans 22 to 140 (activation peptide); the sequence is ANIGFDESNP…KGSHKVTEAA (119 aa). N-linked (GlcNAc...) asparagine glycosylation occurs at N125. 2 cysteine pairs are disulfide-bonded: C162/C205 and C196/C238. Residue C165 is part of the active site. N254 is a glycosylation site (N-linked (GlcNAc...) asparagine). C296 and C346 are joined by a disulfide. Active-site residues include H305 and N325.

Belongs to the peptidase C1 family. As to quaternary structure, interacts with VSR1/BP80B. As to expression, expressed in leaves (at protein level).

Its subcellular location is the vacuole. The catalysed reaction is Hydrolysis of proteins, acting as an aminopeptidase (notably, cleaving Arg-|-Xaa bonds) as well as an endopeptidase.. Functionally, may play a role in proteolysis leading to mobilization of nitrogen during senescence and starvation. This Arabidopsis thaliana (Mouse-ear cress) protein is Thiol protease aleurain.